A 938-amino-acid chain; its full sequence is Myocardin (938 aa).

The MEF2C-binding signature appears at 12–27 (IRRKFRSVLQLRLQQR). RPEL repeat units lie at residues 18–43 (SVLQ…PPLK), 62–87 (DSLR…QAST), and 106–131 (DDLN…PMDS). The interval 37–64 (GLIPPLKSPTEFHDPRKKLDSAKTEDSL) is disordered. Positions 46 to 64 (TEFHDPRKKLDSAKTEDSL) are enriched in basic and acidic residues. Positions 153 to 205 (FEDDSSRDGLSPDQARSEDPQGSGGSTPDIKSTEAPLAGPLDTIQDLTPGSES) are HDAC5-binding. Disordered stretches follow at residues 155–282 (DDSS…PPPM) and 339–381 (NEQM…PLPP). Over residues 210–221 (TASQLSNQSDSG) the composition is skewed to polar residues. The span at 248-265 (NRHKKPKDPKPKVKKLKY) shows a compositional bias: basic residues. A compositionally biased stretch (low complexity) spans 345–360 (NPNSSSTPLNNTPLSP). Over residues 361–372 (VKNSLSGQTGVS) the composition is skewed to polar residues. The 35-residue stretch at 383–417 (LDDLKVSELRQQLRIRGLPVSGTKTALVDRLRPFQ) folds into the SAP domain. A phosphoserine; by GSK3-beta mark is found at Ser-457, Ser-461, Ser-465, and Ser-469. The disordered stretch occupies residues 501-521 (ESLLSSLNGGSGPSEPDGLDS). Residues 522-566 (EKDKMLVEKQKVINQLTWKLRQEQRQVEELRMQLQKQKSGCNDQK) are a coiled coil. The disordered stretch occupies residues 586 to 606 (AAQQASGKGQGHSSDSPPPAC). Residues 588–600 (QQASGKGQGHSSD) show a composition bias toward polar residues. Phosphoserine; by GSK3-beta is present on residues Ser-627, Ser-631, Ser-635, and Ser-639. Composition is skewed to polar residues over residues 667–694 (GAQR…QSSD) and 701–713 (SIPS…SSPT). Positions 667–734 (GAQRENHGVS…DAVKQQMTRS (68 aa)) are disordered. Residues 717-938 (ITQPPSYEDA…SPMDLHLQQW (222 aa)) form a required for interaction with and ubiquitination by STUB1 region. 3 positions are modified to phosphoserine; by MAPK1 and MAPK3: Ser-815, Ser-862, and Ser-869. At Thr-896 the chain carries Phosphothreonine; by MAPK1 and MAPK3.

As to quaternary structure, homodimer. Interacts with MLLT7/FOXO4. Interacts with SRF, its association does not depend on specific DNA sequences for ternary complex formation. Interacts (via C-terminal) with EP300 (via the CREB-binding domain). Interacts with HDAC4 and HDAC5. Interacts with MEF2C. Interacts (via C-terminus) with STUB1/CHIP. Interacts with PURB. Post-translationally, ubiquitinated; by STUB1/CHIP at the C-terminus, leading to its degradation by the proteasome. Phosphorylation by GSK3B is required for STUB1/CHIP-mediated ubiquitination. Phosphorylation negatively regulates transcriptional activity. Phosphorylated; by GSK3B. In terms of tissue distribution, abundantly expressed in the heart, aorta media and bladder, weakly expressed in the stomach, intestine and lung.

The protein localises to the nucleus. Its function is as follows. Smooth muscle cells (SM) and cardiac muscle cells-specific transcriptional factor which uses the canonical single or multiple CArG boxes DNA sequence. Acts as a cofactor of serum response factor (SRF) with the potential to modulate SRF-target genes. Plays a crucial role in cardiogenesis, urinary bladder development, and differentiation of the smooth muscle cell lineage (myogenesis). Positively regulates the transcription of genes involved in vascular smooth muscle contraction. The protein is Myocardin (Myocd) of Rattus norvegicus (Rat).